The chain runs to 212 residues: Casparian strip membrane protein 1 (212 aa).

Positions 1-28 (MDSSNSTKETGDIPIPVTSSKSSKAAPP) are disordered. Residues 1 to 49 (MDSSNSTKETGDIPIPVTSSKSSKAAPPPVVAAKAKSTTKQPLVSGWKR) lie on the Cytoplasmic side of the membrane. Over residues 16–28 (PVTSSKSSKAAPP) the composition is skewed to low complexity. The helical transmembrane segment at 50-70 (GLGIIDFILRICAIAAALAAA) threads the bilayer. Topologically, residues 71–100 (TAMGTTSQQLPFFTQFFQFKADYNDLPAFT) are extracellular. Residues 101-121 (FFVIANAMAGAYLVLSLPFSI) traverse the membrane as a helical segment. Residues 122 to 133 (LCIVRPHILGAR) are Cytoplasmic-facing. Residues 134-154 (LMLLVFDTVAVPLVTAAASAA) form a helical membrane-spanning segment. Over 155–186 (ASIVYLAHNGNSDANWVAICRQFNDFCQRVSG) the chain is Extracellular. A helical transmembrane segment spans residues 187 to 207 (AVVASFITALLFVVLVAVSAV). Residues 208–212 (ALRQK) are Cytoplasmic-facing.

The protein belongs to the Casparian strip membrane proteins (CASP) family. As to quaternary structure, homodimer and heterodimers.

The protein localises to the cell membrane. Functionally, regulates membrane-cell wall junctions and localized cell wall deposition. Required for establishment of the Casparian strip membrane domain (CSD) and the subsequent formation of Casparian strips, a cell wall modification of the root endodermis that determines an apoplastic barrier between the intraorganismal apoplasm and the extraorganismal apoplasm and prevents lateral diffusion. This is Casparian strip membrane protein 1 from Helianthus annuus (Common sunflower).